The following is a 524-amino-acid chain: Peptide chain release factor 3 (524 aa).

The tr-type G domain maps to 11–278 (AKRRTFAIIS…SFVQYAPEPG (268 aa)). GTP-binding positions include 20 to 27 (SHPDAGKT), 88 to 92 (DTPGH), and 142 to 145 (NKLD).

This sequence belongs to the TRAFAC class translation factor GTPase superfamily. Classic translation factor GTPase family. PrfC subfamily.

The protein resides in the cytoplasm. Its function is as follows. Increases the formation of ribosomal termination complexes and stimulates activities of RF-1 and RF-2. It binds guanine nucleotides and has strong preference for UGA stop codons. It may interact directly with the ribosome. The stimulation of RF-1 and RF-2 is significantly reduced by GTP and GDP, but not by GMP. In Lacticaseibacillus casei (strain BL23) (Lactobacillus casei), this protein is Peptide chain release factor 3.